A 187-amino-acid chain; its full sequence is Ribosome maturation factor RimM (187 aa).

The PRC barrel domain maps to 91–183; the sequence is DDGFYDHELE…ILVLTPPEGL (93 aa).

Belongs to the RimM family. In terms of assembly, binds ribosomal protein uS19.

The protein resides in the cytoplasm. Functionally, an accessory protein needed during the final step in the assembly of 30S ribosomal subunit, possibly for assembly of the head region. Essential for efficient processing of 16S rRNA. May be needed both before and after RbfA during the maturation of 16S rRNA. It has affinity for free ribosomal 30S subunits but not for 70S ribosomes. The protein is Ribosome maturation factor RimM of Corynebacterium jeikeium (strain K411).